We begin with the raw amino-acid sequence, 944 residues long: Protocadherin gamma-C5 (944 aa).

Positions 1-29 (MGPKTLPQLAGKWQVLCMLSLCCWGWVSG) are cleaved as a signal peptide. Cadherin domains lie at 30-133 (QLRY…SPSF), 134-242 (ATPE…APTF), 243-350 (QSSV…APEV), 351-454 (LLAS…APRF), 455-564 (NQQL…APAV), and 571-677 (WEHS…MPKS). The Extracellular segment spans residues 30 to 693 (QLRYSVVEES…PPERSDLTLY (664 aa)). N-linked (GlcNAc...) asparagine glycans are attached at residues asparagine 265, asparagine 443, and asparagine 547. A helical membrane pass occupies residues 694–714 (LIVALATVSLLSLVTFTFLSA). Over 715–944 (KCLQGNADGD…KKKSGKKEKK (230 aa)) the chain is Cytoplasmic. Disordered stretches follow at residues 722-747 (DGDGGGGQCCRRQDSPSPDFYKQSSP), 812-853 (SNTL…WPNN), and 914-944 (ATLTNAAGKRDGKAPAGGNGNKKKSGKKEKK). The span at 820–853 (QQAPPNTDWRFSQAQRPGTSGSQNGDDTGTWPNN) shows a compositional bias: polar residues. Positions 934–944 (NKKKSGKKEKK) are enriched in basic residues.

The protein resides in the cell membrane. Its function is as follows. Potential calcium-dependent cell-adhesion protein. May be involved in the establishment and maintenance of specific neuronal connections in the brain. The protein is Protocadherin gamma-C5 (PCDHGC5) of Homo sapiens (Human).